Reading from the N-terminus, the 527-residue chain is Importin subunit alpha (527 aa).

Positions 1-58 constitute an IBB domain; the sequence is MSLRPNSRTEARRSRYKVAVDAEEGRRRREDNMVEIRKNKREENLLKKRREGLLQAQQ. 8 ARM repeats span residues 109–151, 152–196, 197–234, 235–279, 280–319, 320–362, 363–403, and 404–445; these read IEEV…TSEN, TKVV…YRDL, VLGH…RGKP, QPLF…DKIQ, AVIE…DDIQ, TQVM…NRNQ, IQIV…GGNH, and DQIK…KIGE.

The protein belongs to the importin alpha family. Forms a complex with importin subunit beta-1.

Its subcellular location is the cytoplasm. Binds specifically and directly to substrates containing either a simple or bipartite NLS motif. Promotes docking of import substrates to the nuclear envelope. Seems to act as a cytosolic receptor for both simple and bipartite NLS motifs. This chain is Importin subunit alpha, found in Solanum lycopersicum (Tomato).